A 491-amino-acid polypeptide reads, in one-letter code: UDP-N-acetylmuramate--L-alanine ligase (491 aa).

Residue 126-132 (GTHGKTT) participates in ATP binding.

The protein belongs to the MurCDEF family.

It is found in the cytoplasm. The catalysed reaction is UDP-N-acetyl-alpha-D-muramate + L-alanine + ATP = UDP-N-acetyl-alpha-D-muramoyl-L-alanine + ADP + phosphate + H(+). It functions in the pathway cell wall biogenesis; peptidoglycan biosynthesis. In terms of biological role, cell wall formation. This chain is UDP-N-acetylmuramate--L-alanine ligase, found in Escherichia coli (strain SE11).